The sequence spans 34 residues: Photosystem II reaction center protein M (34 aa).

Residues Ile-5–Leu-25 traverse the membrane as a helical segment.

The protein belongs to the PsbM family. In terms of assembly, PSII is composed of 1 copy each of membrane proteins PsbA, PsbB, PsbC, PsbD, PsbE, PsbF, PsbH, PsbI, PsbJ, PsbK, PsbL, PsbM, PsbT, PsbX, PsbY, PsbZ, Psb30/Ycf12, at least 3 peripheral proteins of the oxygen-evolving complex and a large number of cofactors. It forms dimeric complexes.

It is found in the plastid. Its subcellular location is the chloroplast thylakoid membrane. One of the components of the core complex of photosystem II (PSII). PSII is a light-driven water:plastoquinone oxidoreductase that uses light energy to abstract electrons from H(2)O, generating O(2) and a proton gradient subsequently used for ATP formation. It consists of a core antenna complex that captures photons, and an electron transfer chain that converts photonic excitation into a charge separation. This subunit is found at the monomer-monomer interface. This is Photosystem II reaction center protein M from Anthoceros angustus (Hornwort).